The primary structure comprises 273 residues: Flagellin FljK (273 aa).

It belongs to the bacterial flagellin family. In C.crescentus, the flagellar filament is composed of multiple flagellins of 29 kDa; 27 kDa and 25 kDa.

The protein localises to the secreted. It is found in the bacterial flagellum. Flagellin is the subunit protein which polymerizes to form the filaments of bacterial flagella. The sequence is that of Flagellin FljK (fljK) from Caulobacter vibrioides (strain ATCC 19089 / CIP 103742 / CB 15) (Caulobacter crescentus).